The chain runs to 125 residues: Large ribosomal subunit protein bL12 (125 aa).

Belongs to the bacterial ribosomal protein bL12 family. In terms of assembly, homodimer. Part of the ribosomal stalk of the 50S ribosomal subunit. Forms a multimeric L10(L12)X complex, where L10 forms an elongated spine to which 2 to 4 L12 dimers bind in a sequential fashion. Binds GTP-bound translation factors.

Functionally, forms part of the ribosomal stalk which helps the ribosome interact with GTP-bound translation factors. Is thus essential for accurate translation. The chain is Large ribosomal subunit protein bL12 from Azorhizobium caulinodans (strain ATCC 43989 / DSM 5975 / JCM 20966 / LMG 6465 / NBRC 14845 / NCIMB 13405 / ORS 571).